The following is a 96-amino-acid chain: Aspartyl/glutamyl-tRNA(Asn/Gln) amidotransferase subunit C (96 aa).

It belongs to the GatC family. Heterotrimer of A, B and C subunits.

The enzyme catalyses L-glutamyl-tRNA(Gln) + L-glutamine + ATP + H2O = L-glutaminyl-tRNA(Gln) + L-glutamate + ADP + phosphate + H(+). The catalysed reaction is L-aspartyl-tRNA(Asn) + L-glutamine + ATP + H2O = L-asparaginyl-tRNA(Asn) + L-glutamate + ADP + phosphate + 2 H(+). In terms of biological role, allows the formation of correctly charged Asn-tRNA(Asn) or Gln-tRNA(Gln) through the transamidation of misacylated Asp-tRNA(Asn) or Glu-tRNA(Gln) in organisms which lack either or both of asparaginyl-tRNA or glutaminyl-tRNA synthetases. The reaction takes place in the presence of glutamine and ATP through an activated phospho-Asp-tRNA(Asn) or phospho-Glu-tRNA(Gln). This chain is Aspartyl/glutamyl-tRNA(Asn/Gln) amidotransferase subunit C, found in Chloroflexus aggregans (strain MD-66 / DSM 9485).